A 155-amino-acid chain; its full sequence is Fibroblast growth factor 2 (155 aa).

Residues 1-9 (MAAGSITTL) constitute a propeptide that is removed on maturation. The tract at residues 1–20 (MAAGSITTLPALPEDGGSGA) is disordered. Asn36 contributes to the heparin binding site. The Cell attachment site; atypical signature appears at 46–48 (DGR). At Tyr82 the chain carries Phosphotyrosine; by TEC. The short motif at 88 to 90 (DGR) is the Cell attachment site; atypical element. Residue Lys95 forms a Glycyl lysine isopeptide (Lys-Gly) (interchain with G-Cter in SUMO1) linkage. The heparin-binding stretch occupies residues 128–144 (KRTGQYKLGPKTGPGQK).

This sequence belongs to the heparin-binding growth factors family. Monomer. Homodimer. Interacts with FGFR1, FGFR2, FGFR3 and FGFR4. Affinity between fibroblast growth factors (FGFs) and their receptors is increased by heparan sulfate glycosaminoglycans that function as coreceptors. Interacts with CSPG4, FGFBP1 and TEC. Found in a complex with FGFBP1, FGF1 and FGF2. Interacts with FGFBP3. Interacts with integrin ITGAV:ITGB3; the interaction is required for FGF2 signaling. Interacts with SNORC (via the extracellular domain). Interacts with glypican GPC3. Phosphorylation at Tyr-82 regulates FGF2 unconventional secretion.

It is found in the secreted. The protein resides in the nucleus. Functionally, acts as a ligand for FGFR1, FGFR2, FGFR3 and FGFR4. Also acts as an integrin ligand which is required for FGF2 signaling. Binds to integrin ITGAV:ITGB3. Plays an important role in the regulation of cell survival, cell division, cell differentiation and cell migration. Functions as a potent mitogen in vitro. Can induce angiogenesis. Mediates phosphorylation of ERK1/2 and thereby promotes retinal lens fiber differentiation. The protein is Fibroblast growth factor 2 (FGF2) of Bos taurus (Bovine).